The sequence spans 409 residues: Na(+)-translocating NADH-quinone reductase subunit F (409 aa).

The helical transmembrane segment at 5 to 25 (FIFGIIAFTALVLVLAVIILF) threads the bilayer. Residues 34–128 (GDITISINND…SMDVELPEEI (95 aa)) enclose the 2Fe-2S ferredoxin-type domain. Cysteine 71, cysteine 77, cysteine 80, and cysteine 112 together coordinate [2Fe-2S] cluster. The region spanning 131–271 (VKKWECTVIS…SGPFGEFFAK (141 aa)) is the FAD-binding FR-type domain.

Belongs to the NqrF family. In terms of assembly, composed of six subunits; NqrA, NqrB, NqrC, NqrD, NqrE and NqrF. Requires [2Fe-2S] cluster as cofactor. The cofactor is FAD.

It localises to the cell inner membrane. The catalysed reaction is a ubiquinone + n Na(+)(in) + NADH + H(+) = a ubiquinol + n Na(+)(out) + NAD(+). Its function is as follows. NQR complex catalyzes the reduction of ubiquinone-1 to ubiquinol by two successive reactions, coupled with the transport of Na(+) ions from the cytoplasm to the periplasm. The first step is catalyzed by NqrF, which accepts electrons from NADH and reduces ubiquinone-1 to ubisemiquinone by a one-electron transfer pathway. This Actinobacillus pleuropneumoniae serotype 5b (strain L20) protein is Na(+)-translocating NADH-quinone reductase subunit F.